The primary structure comprises 130 residues: Small ribosomal subunit protein uS9 (130 aa).

It belongs to the universal ribosomal protein uS9 family.

In Shewanella denitrificans (strain OS217 / ATCC BAA-1090 / DSM 15013), this protein is Small ribosomal subunit protein uS9.